Here is a 136-residue protein sequence, read N- to C-terminus: Large ribosomal subunit protein uL16 (136 aa).

The protein belongs to the universal ribosomal protein uL16 family. In terms of assembly, part of the 50S ribosomal subunit.

Functionally, binds 23S rRNA and is also seen to make contacts with the A and possibly P site tRNAs. This chain is Large ribosomal subunit protein uL16, found in Ehrlichia canis (strain Jake).